Reading from the N-terminus, the 420-residue chain is Septin-8-A (420 aa).

One can recognise a Septin-type G domain in the interval 39 to 305; sequence QGFCFNILCV…ELYRRCKLEE (267 aa). A G1 motif region spans residues 49 to 56; that stretch reads GETGIGKS. GTP contacts are provided by residues 49–56, G104, 185–193, G239, and R254; these read GETGIGKS and KADTISKSE. Residues 101-104 form a G3 motif region; sequence DTVG. The tract at residues 184 to 187 is G4 motif; the sequence is AKAD. Residues 321–407 adopt a coiled-coil conformation; that stretch reads QETYEAKRKE…RRKVAAETLS (87 aa). Residues 393–420 form a disordered region; that stretch reads MNAFNRRKVAAETLSLSQPLKKDKDKKN.

It belongs to the TRAFAC class TrmE-Era-EngA-EngB-Septin-like GTPase superfamily. Septin GTPase family.

In Danio rerio (Zebrafish), this protein is Septin-8-A (sept8a).